A 505-amino-acid polypeptide reads, in one-letter code: 11S globulin seed storage protein 1 (505 aa).

The signal sequence occupies residues 1 to 24 (MAKPILLSIYLCLIIVALFNGCLA). 2 cysteine pairs are disulfide-bonded: Cys-37–Cys-70 and Cys-113–Cys-323. Positions 42–255 (LDALEPTNRI…AFNVDTETAR (214 aa)) constitute a Cupin type-1 1 domain. 3 igE-binding regions span residues 118–132 (EESQ…RREF), 208–219 (EQHRRQQQHQQR), and 238–249 (FDAEFLADAFNV). The tract at residues 193-232 (GNPDDEFRPQGQQEYEQHRRQQQHQQRRGEHGEQQRDLGN) is disordered. Positions 219–228 (RRGEHGEQQR) are enriched in basic and acidic residues. Basic and acidic residues predominate over residues 282-316 (WSREEQEHEERKERERERESESERRQSRRGGRDDN). The disordered stretch occupies residues 282 to 318 (WSREEQEHEERKERERERESESERRQSRRGGRDDNGL). An NGXEET; peptidase recognition motif motif is present at residues 316–321 (NGLEET). Positions 329–478 (ENIGDPSRAD…AFQIPREDAR (150 aa)) constitute a Cupin type-1 2 domain.

It belongs to the 11S seed storage protein (globulins) family. Homohexamer. Each subunit is composed of an acidic and a basic chain derived from a single precursor and linked by a disulfide bond. As to expression, expressed in seeds (at protein level). Expressed in seeds.

Functionally, seed storage protein. The protein is 11S globulin seed storage protein 1 of Carya illinoinensis (Pecan).